We begin with the raw amino-acid sequence, 208 residues long: Guanylate kinase (208 aa).

A Guanylate kinase-like domain is found at 5-184 (GLLIVFSGPS…AAERVKCVIE (180 aa)). 12 to 19 (GPSGVGKG) contacts ATP.

This sequence belongs to the guanylate kinase family.

Its subcellular location is the cytoplasm. The catalysed reaction is GMP + ATP = GDP + ADP. In terms of biological role, essential for recycling GMP and indirectly, cGMP. The sequence is that of Guanylate kinase from Streptococcus pneumoniae serotype 4 (strain ATCC BAA-334 / TIGR4).